Reading from the N-terminus, the 446-residue chain is Phosphoglucosamine mutase (446 aa).

Serine 103 serves as the catalytic Phosphoserine intermediate. Serine 103, aspartate 242, aspartate 244, and aspartate 246 together coordinate Mg(2+). Position 103 is a phosphoserine (serine 103).

The protein belongs to the phosphohexose mutase family. Mg(2+) is required as a cofactor. In terms of processing, activated by phosphorylation.

The enzyme catalyses alpha-D-glucosamine 1-phosphate = D-glucosamine 6-phosphate. Functionally, catalyzes the conversion of glucosamine-6-phosphate to glucosamine-1-phosphate. The protein is Phosphoglucosamine mutase of Vibrio vulnificus (strain YJ016).